Here is a 259-residue protein sequence, read N- to C-terminus: Chaplin-C (259 aa).

A signal peptide spans 1–28 (MRQATRKGLMTMAAATGVIAAAGGAAHA). The 41-residue stretch at 39 to 79 (SPGVLSGNTVQAPVHVPVNVCGNTVDVVGVLNPAMGNACAN) folds into the Chaplin 1 domain. Over residues 84 to 112 (ASGGHGGHGGHGGYGDSGGEGGSHGGSHA) the composition is skewed to gly residues. Disordered stretches follow at residues 84–129 (ASGG…NHVE) and 154–227 (GNDC…ALAE). The 41-residue stretch at 119–159 (SPGVGSGNHVEVPIDVPVNVCGNSIDVVGALNPTTGNDCGN) folds into the Chaplin 2 domain. The span at 180–189 (HNPGNPGNPD) shows a compositional bias: low complexity. The LPXTG sorting signal motif lies at 225–229 (LAETG). At threonine 228 the chain carries Pentaglycyl murein peptidoglycan amidated threonine. Positions 229-259 (GSDLPLGLALPVGAGALLAGTVLYRKARASV) are cleaved as a propeptide — removed by sortase.

This sequence belongs to the chaplin family. Long chaplin subfamily.

It localises to the secreted. The protein localises to the cell wall. One of 8 partially redundant surface-active proteins required for efficient formation of aerial mycelium; the short chaplins assemble into a hydrophobic, amyloidal fibrillar surface layer that envelopes and protects aerial hyphae and spores, presumably anchored to the long chaplins. Chaplins have an overlapping function with the surface-active SapB peptide; chaplins are essential on minimal medium while on rich medium both chaplins and SapB are required for efficient aerial hyphae formation. A minimal chaplin strain capable of forming aerial mycelium/hyphae on minimal medium contains ChpC, ChpE and ChpH. The strain also has restored rodlet formation on the hyphae surface. The long chaplins (ChpA, ChpB, ChpC) are not absolutely necessary for short chaplin localization or rodlet formation, but probably play a role in initiating aerial hyphae development. Chaplins are also involved in cell attachment to a hydrophobic surface. This chain is Chaplin-C, found in Streptomyces coelicolor (strain ATCC BAA-471 / A3(2) / M145).